Reading from the N-terminus, the 353-residue chain is Photosystem II D2 protein (353 aa).

The residue at position 2 (T2) is an N-acetylthreonine. Position 2 is a phosphothreonine (T2). The chain crosses the membrane as a helical span at residues 41 to 61 (CAYFALGGWFTGTTFVTSWYT). Position 118 (H118) interacts with chlorophyll a. A helical transmembrane segment spans residues 125-141 (GFMLRQFELARSVQLRP). Q130 and N143 together coordinate pheophytin a. A helical membrane pass occupies residues 153 to 166 (VFVSVSLIYPLGQA). H198 serves as a coordination point for chlorophyll a. The helical transmembrane segment at 208 to 228 (AALLCAIHGATVENTLFEDGD) threads the bilayer. Positions 215 and 262 each coordinate a plastoquinone. A Fe cation-binding site is contributed by H215. H269 lines the Fe cation pocket. Residues 279-295 (GLWMSAIGVVGLALNLR) traverse the membrane as a helical segment.

Belongs to the reaction center PufL/M/PsbA/D family. PSII is composed of 1 copy each of membrane proteins PsbA, PsbB, PsbC, PsbD, PsbE, PsbF, PsbH, PsbI, PsbJ, PsbK, PsbL, PsbM, PsbT, PsbX, PsbY, PsbZ, Psb30/Ycf12, at least 3 peripheral proteins of the oxygen-evolving complex and a large number of cofactors. It forms dimeric complexes. It depends on The D1/D2 heterodimer binds P680, chlorophylls that are the primary electron donor of PSII, and subsequent electron acceptors. It shares a non-heme iron and each subunit binds pheophytin, quinone, additional chlorophylls, carotenoids and lipids. There is also a Cl(-1) ion associated with D1 and D2, which is required for oxygen evolution. The PSII complex binds additional chlorophylls, carotenoids and specific lipids. as a cofactor.

Its subcellular location is the plastid. The protein resides in the chloroplast thylakoid membrane. It catalyses the reaction 2 a plastoquinone + 4 hnu + 2 H2O = 2 a plastoquinol + O2. Its function is as follows. Photosystem II (PSII) is a light-driven water:plastoquinone oxidoreductase that uses light energy to abstract electrons from H(2)O, generating O(2) and a proton gradient subsequently used for ATP formation. It consists of a core antenna complex that captures photons, and an electron transfer chain that converts photonic excitation into a charge separation. The D1/D2 (PsbA/PsbD) reaction center heterodimer binds P680, the primary electron donor of PSII as well as several subsequent electron acceptors. D2 is needed for assembly of a stable PSII complex. This is Photosystem II D2 protein from Angiopteris evecta (Mule's foot fern).